Consider the following 301-residue polypeptide: 4-hydroxybenzoate octaprenyltransferase (301 aa).

8 helical membrane-spanning segments follow: residues 34-54 (IGSL…ADGL), 57-77 (LWTL…GCVI), 108-128 (LWVF…LNWL), 152-172 (LPQV…FAAV), 176-196 (VPLL…AYDT), 221-241 (FDLI…VLVG), 245-265 (DLGV…AYEF), and 279-299 (AFLH…VAVA).

The protein belongs to the UbiA prenyltransferase family. Requires Mg(2+) as cofactor.

It localises to the cell inner membrane. The enzyme catalyses all-trans-octaprenyl diphosphate + 4-hydroxybenzoate = 4-hydroxy-3-(all-trans-octaprenyl)benzoate + diphosphate. It functions in the pathway cofactor biosynthesis; ubiquinone biosynthesis. In terms of biological role, catalyzes the prenylation of para-hydroxybenzoate (PHB) with an all-trans polyprenyl group. Mediates the second step in the final reaction sequence of ubiquinone-8 (UQ-8) biosynthesis, which is the condensation of the polyisoprenoid side chain with PHB, generating the first membrane-bound Q intermediate 3-octaprenyl-4-hydroxybenzoate. In Xanthomonas euvesicatoria pv. vesicatoria (strain 85-10) (Xanthomonas campestris pv. vesicatoria), this protein is 4-hydroxybenzoate octaprenyltransferase.